Reading from the N-terminus, the 552-residue chain is Hydroxylamine reductase (552 aa).

[2Fe-2S] cluster is bound by residues cysteine 3, cysteine 6, cysteine 18, and cysteine 25. Residues histidine 250, glutamate 274, cysteine 318, cysteine 406, cysteine 434, cysteine 459, glutamate 493, and lysine 495 each contribute to the hybrid [4Fe-2O-2S] cluster site. At cysteine 406 the chain carries Cysteine persulfide.

This sequence belongs to the HCP family. Requires [2Fe-2S] cluster as cofactor. The cofactor is hybrid [4Fe-2O-2S] cluster.

Its subcellular location is the cytoplasm. The catalysed reaction is A + NH4(+) + H2O = hydroxylamine + AH2 + H(+). Catalyzes the reduction of hydroxylamine to form NH(3) and H(2)O. This chain is Hydroxylamine reductase, found in Shewanella woodyi (strain ATCC 51908 / MS32).